The primary structure comprises 188 residues: Elongation factor P-like protein (188 aa).

This sequence belongs to the elongation factor P family.

The chain is Elongation factor P-like protein from Xanthomonas campestris pv. campestris (strain 8004).